Consider the following 556-residue polypeptide: 2-succinyl-5-enolpyruvyl-6-hydroxy-3-cyclohexene-1-carboxylate synthase (556 aa).

It belongs to the TPP enzyme family. MenD subfamily. Homodimer. The cofactor is Mg(2+). It depends on Mn(2+) as a cofactor. Thiamine diphosphate is required as a cofactor.

The catalysed reaction is isochorismate + 2-oxoglutarate + H(+) = 5-enolpyruvoyl-6-hydroxy-2-succinyl-cyclohex-3-ene-1-carboxylate + CO2. It participates in quinol/quinone metabolism; 1,4-dihydroxy-2-naphthoate biosynthesis; 1,4-dihydroxy-2-naphthoate from chorismate: step 2/7. The protein operates within quinol/quinone metabolism; menaquinone biosynthesis. Functionally, catalyzes the thiamine diphosphate-dependent decarboxylation of 2-oxoglutarate and the subsequent addition of the resulting succinic semialdehyde-thiamine pyrophosphate anion to isochorismate to yield 2-succinyl-5-enolpyruvyl-6-hydroxy-3-cyclohexene-1-carboxylate (SEPHCHC). The protein is 2-succinyl-5-enolpyruvyl-6-hydroxy-3-cyclohexene-1-carboxylate synthase of Escherichia fergusonii (strain ATCC 35469 / DSM 13698 / CCUG 18766 / IAM 14443 / JCM 21226 / LMG 7866 / NBRC 102419 / NCTC 12128 / CDC 0568-73).